The primary structure comprises 502 residues: Cytochrome P450 2J2 (502 aa).

C448 provides a ligand contact to heme.

Belongs to the cytochrome P450 family. Heme serves as cofactor. In terms of tissue distribution, highly expressed in heart, present at lower levels in liver, kidney and skeletal muscle (at protein level).

It localises to the endoplasmic reticulum membrane. The protein resides in the microsome membrane. It catalyses the reaction (5Z,8Z,11Z,14Z)-eicosatetraenoate + reduced [NADPH--hemoprotein reductase] + O2 = 5,6-epoxy-(8Z,11Z,14Z)-eicosatrienoate + oxidized [NADPH--hemoprotein reductase] + H2O + H(+). The enzyme catalyses (5Z,8Z,11Z,14Z)-eicosatetraenoate + reduced [NADPH--hemoprotein reductase] + O2 = (8R,9S)-epoxy-(5Z,11Z,14Z)-eicosatrienoate + oxidized [NADPH--hemoprotein reductase] + H2O + H(+). The catalysed reaction is (5Z,8Z,11Z,14Z)-eicosatetraenoate + reduced [NADPH--hemoprotein reductase] + O2 = (8S,9R)-epoxy-(5Z,11Z,14Z)-eicosatrienoate + oxidized [NADPH--hemoprotein reductase] + H2O + H(+). It carries out the reaction (5Z,8Z,11Z,14Z)-eicosatetraenoate + reduced [NADPH--hemoprotein reductase] + O2 = (11R,12S)-epoxy-(5Z,8Z,14Z)-eicosatrienoate + oxidized [NADPH--hemoprotein reductase] + H2O + H(+). It catalyses the reaction (5Z,8Z,11Z,14Z)-eicosatetraenoate + reduced [NADPH--hemoprotein reductase] + O2 = (11S,12R)-epoxy-(5Z,8Z,14Z)-eicosatrienoate + oxidized [NADPH--hemoprotein reductase] + H2O + H(+). The enzyme catalyses (5Z,8Z,11Z,14Z)-eicosatetraenoate + reduced [NADPH--hemoprotein reductase] + O2 = (14R,15S)-epoxy-(5Z,8Z,11Z)-eicosatrienoate + oxidized [NADPH--hemoprotein reductase] + H2O + H(+). The catalysed reaction is (5Z,8Z,11Z,14Z)-eicosatetraenoate + reduced [NADPH--hemoprotein reductase] + O2 = (14S,15R)-epoxy-(5Z,8Z,11Z)-eicosatrienoate + oxidized [NADPH--hemoprotein reductase] + H2O + H(+). It carries out the reaction (15S)-hydroperoxy-(5Z,8Z,11Z,13E)-eicosatetraenoate = (13S)-hydroxy-(14S,15S)-epoxy-(5Z,8Z,11Z)-eicosatrienoate. It catalyses the reaction (15S)-hydroperoxy-(5Z,8Z,11Z,13E)-eicosatetraenoate = (13R)-hydroxy-(14S,15S)-epoxy-(5Z,8Z,11Z)-eicosatrienoate. The enzyme catalyses (5Z,8Z,11Z,14Z,17Z)-eicosapentaenoate + reduced [NADPH--hemoprotein reductase] + O2 = (17R,18S)-epoxy-(5Z,8Z,11Z,14Z)-eicosatetraenoate + oxidized [NADPH--hemoprotein reductase] + H2O + H(+). The catalysed reaction is (5Z,8Z,11Z,14Z,17Z)-eicosapentaenoate + reduced [NADPH--hemoprotein reductase] + O2 = (17S,18R)-epoxy-(5Z,8Z,11Z,14Z)-eicosatetraenoate + oxidized [NADPH--hemoprotein reductase] + H2O + H(+). It carries out the reaction (4Z,7Z,10Z,13Z,16Z,19Z)-docosahexaenoate + reduced [NADPH--hemoprotein reductase] + O2 = (19R,20S)-epoxy-(4Z,7Z,10Z,13Z,16Z)-docosapentaenoate + oxidized [NADPH--hemoprotein reductase] + H2O + H(+). It catalyses the reaction (4Z,7Z,10Z,13Z,16Z,19Z)-docosahexaenoate + reduced [NADPH--hemoprotein reductase] + O2 = (19S,20R)-epoxy-(4Z,7Z,10Z,13Z,16Z)-docosapentaenoate + oxidized [NADPH--hemoprotein reductase] + H2O + H(+). The enzyme catalyses albendazole + reduced [NADPH--hemoprotein reductase] + O2 = hydroxyalbendazole + oxidized [NADPH--hemoprotein reductase] + H2O + H(+). The catalysed reaction is albendazole + reduced [NADPH--hemoprotein reductase] + O2 = albendazole S-oxide + oxidized [NADPH--hemoprotein reductase] + H2O + H(+). It carries out the reaction fenbendazole + reduced [NADPH--hemoprotein reductase] + O2 = fenbendazole S-oxide + oxidized [NADPH--hemoprotein reductase] + H2O + H(+). The protein operates within lipid metabolism; arachidonate metabolism. In terms of biological role, a cytochrome P450 monooxygenase involved in the metabolism of polyunsaturated fatty acids (PUFA) in the cardiovascular system. Mechanistically, uses molecular oxygen inserting one oxygen atom into a substrate, and reducing the second into a water molecule, with two electrons provided by NADPH via cytochrome P450 reductase (NADPH--hemoprotein reductase). Catalyzes the epoxidation of double bonds of PUFA. Converts arachidonic acid to four regioisomeric epoxyeicosatrienoic acids (EpETrE), likely playing a major role in the epoxidation of endogenous cardiac arachidonic acid pools. In endothelial cells, participates in eicosanoids metabolism by converting hydroperoxide species into hydroxy epoxy metabolites. In combination with 15-lipoxygenase metabolizes arachidonic acid and converts hydroperoxyicosatetraenoates (HpETEs) into hydroxy epoxy eicosatrienoates (HEETs), which are precursors of vasodilatory trihydroxyicosatrienoic acids (THETAs). This hydroperoxide isomerase activity is NADPH- and O2-independent. Catalyzes the monooxygenation of a various xenobiotics, such as danazol, amiodarone, terfenadine, astemizole, thioridazine, tamoxifen, cyclosporin A and nabumetone. Catalyzes hydroxylation of the anthelmintics albendazole and fenbendazole. Catalyzes the sulfoxidation of fenbedazole. The polypeptide is Cytochrome P450 2J2 (Homo sapiens (Human)).